Here is a 336-residue protein sequence, read N- to C-terminus: Fructose-1,6-bisphosphatase class 1 (336 aa).

Glu92, Asp115, Leu117, and Asp118 together coordinate Mg(2+). Residues 118 to 121 (DGSS), Asn211, Tyr244, 262 to 264 (YLY), and Lys274 contribute to the substrate site. Position 280 (Glu280) interacts with Mg(2+).

Belongs to the FBPase class 1 family. Homotetramer. Requires Mg(2+) as cofactor.

It is found in the cytoplasm. It carries out the reaction beta-D-fructose 1,6-bisphosphate + H2O = beta-D-fructose 6-phosphate + phosphate. Its pathway is carbohydrate biosynthesis; gluconeogenesis. The protein is Fructose-1,6-bisphosphatase class 1 of Hahella chejuensis (strain KCTC 2396).